A 147-amino-acid polypeptide reads, in one-letter code: Protein-export protein SecB (147 aa).

Belongs to the SecB family. In terms of assembly, homotetramer, a dimer of dimers. One homotetramer interacts with 1 SecA dimer.

The protein resides in the cytoplasm. In terms of biological role, one of the proteins required for the normal export of preproteins out of the cell cytoplasm. It is a molecular chaperone that binds to a subset of precursor proteins, maintaining them in a translocation-competent state. It also specifically binds to its receptor SecA. This is Protein-export protein SecB from Neisseria meningitidis serogroup B (strain ATCC BAA-335 / MC58).